A 335-amino-acid chain; its full sequence is tRNA N6-adenosine threonylcarbamoyltransferase (335 aa).

Fe cation-binding residues include His110 and His114. Residues 132–136, Asp165, Gly178, and Asn271 contribute to the substrate site; that span reads LVSGG. Asp299 serves as a coordination point for Fe cation.

It belongs to the KAE1 / TsaD family. Fe(2+) serves as cofactor.

It localises to the cytoplasm. It carries out the reaction L-threonylcarbamoyladenylate + adenosine(37) in tRNA = N(6)-L-threonylcarbamoyladenosine(37) in tRNA + AMP + H(+). Functionally, required for the formation of a threonylcarbamoyl group on adenosine at position 37 (t(6)A37) in tRNAs that read codons beginning with adenine. Is involved in the transfer of the threonylcarbamoyl moiety of threonylcarbamoyl-AMP (TC-AMP) to the N6 group of A37, together with TsaE and TsaB. TsaD likely plays a direct catalytic role in this reaction. This is tRNA N6-adenosine threonylcarbamoyltransferase from Campylobacter jejuni subsp. jejuni serotype O:2 (strain ATCC 700819 / NCTC 11168).